A 466-amino-acid chain; its full sequence is 23S rRNA (uracil(1939)-C(5))-methyltransferase RlmD (466 aa).

The TRAM domain maps to 1–54 (MVDVLNIESLDLEARGIAHRDGKVLFVEGALPGERVTVQTVRRKPSYEIAKVEE). Cys-67, Cys-73, Cys-76, and Cys-155 together coordinate [4Fe-4S] cluster. Gln-264, Phe-293, Asn-298, Glu-314, Asn-342, and Asp-363 together coordinate S-adenosyl-L-methionine. Cys-393 acts as the Nucleophile in catalysis.

This sequence belongs to the class I-like SAM-binding methyltransferase superfamily. RNA M5U methyltransferase family. RlmD subfamily.

It carries out the reaction uridine(1939) in 23S rRNA + S-adenosyl-L-methionine = 5-methyluridine(1939) in 23S rRNA + S-adenosyl-L-homocysteine + H(+). Its function is as follows. Catalyzes the formation of 5-methyl-uridine at position 1939 (m5U1939) in 23S rRNA. In Bordetella pertussis (strain Tohama I / ATCC BAA-589 / NCTC 13251), this protein is 23S rRNA (uracil(1939)-C(5))-methyltransferase RlmD.